The chain runs to 27 residues: Delta-conotoxin SuVIA (27 aa).

3 disulfides stabilise this stretch: Cys1/Cys17, Cys8/Cys21, and Cys16/Cys25.

Belongs to the conotoxin O1 superfamily. In terms of tissue distribution, expressed by the venom duct, in the proximal part (indicative of a defensive role).

Its subcellular location is the secreted. Functionally, this toxin activates voltage-gated sodium channels (Nav1.3/SCN3A (EC(50)=3.98 nM), Nav1.4/SCN4A (EC(50)=4.99 nM), Nav1.6/SCN8A (EC(50)=1.27 nM) and Nav1.7/SCN9A (EC(50)=2.42 nM)). It shifts the voltage-dependence of activation to more hyperpolarized potentials but has only little effect on channel inactivation. In vivo, it induces nocifensive or pain-like behaviors in mice when injected intraplantarly. This is coherent with the specific defensive role deduced from its proximal position in the venom gland. This chain is Delta-conotoxin SuVIA, found in Conus suturatus (Sutured cone).